The following is a 143-amino-acid chain: Large ribosomal subunit protein eL28z (143 aa).

This sequence belongs to the eukaryotic ribosomal protein eL28 family. Component of the large ribosomal subunit. Expressed in seedlings, roots, stems, leaves, inflorescences and siliques.

It localises to the cytoplasm. It is found in the nucleus. Its subcellular location is the nucleolus. The protein localises to the nucleoplasm. Component of the large ribosomal subunit. Essential in leaf polarity establishment, probably having a role for translation in leaf dorsoventral patterning to specify leaf adaxial identity. This Arabidopsis thaliana (Mouse-ear cress) protein is Large ribosomal subunit protein eL28z.